The primary structure comprises 77 residues: Acyl carrier protein (77 aa).

One can recognise a Carrier domain in the interval 2-77; that stretch reads SNIEERVKKI…AAIDYVSKNQ (76 aa). At S37 the chain carries O-(pantetheine 4'-phosphoryl)serine.

This sequence belongs to the acyl carrier protein (ACP) family. In terms of processing, 4'-phosphopantetheine is transferred from CoA to a specific serine of apo-ACP by AcpS. This modification is essential for activity because fatty acids are bound in thioester linkage to the sulfhydryl of the prosthetic group.

It is found in the cytoplasm. It functions in the pathway lipid metabolism; fatty acid biosynthesis. Functionally, carrier of the growing fatty acid chain in fatty acid biosynthesis. In Shewanella denitrificans (strain OS217 / ATCC BAA-1090 / DSM 15013), this protein is Acyl carrier protein.